Consider the following 1340-residue polypeptide: Thioester-containing protein 1 allele S1 (1340 aa).

The signal sequence occupies residues 1-21 (MWQFIRSRILTVIIFIGAAHG). Asn-68, Asn-199, Asn-242, Asn-312, and Asn-481 each carry an N-linked (GlcNAc...) asparagine glycan. The interval 580–609 (ENEFDIFHSLGLFARTLDDILFDSANEKTG) is may contain the cleavage site. Residues Asn-637, Asn-728, Asn-813, and Asn-828 are each glycosylated (N-linked (GlcNAc...) asparagine). Positions 859-862 (CGEQ) form a cross-link, isoglutamyl cysteine thioester (Cys-Gln). Disulfide bonds link Cys-1217–Cys-1283, Cys-1326–Cys-1338, and Cys-1329–Cys-1334.

Heterodimer of a TEP1-N chain and an TEP1-C chain non-covalently linked. Forms a complex composed of TEP1-N and TEP1-C heterodimer, LRIM1 and APL1C; the interaction stabilizes TEP1-N and TEP1-C heterodimer, prevents its binding to tissues while circulating in the hemolymph and protects the thioester bond from hydrolysis. Mature TEP1 and to a lesser extent full-length TEP1 interact with SPCLIP1; the interaction is induced by microbial infection. In the hemolymph, the full-length protein is cleaved by an unknow protease into a 75kDa N-terminal (TEP1-N) chain and an 80kDa C-terminal (TEP1-C) chain which remain non-covalently linked. The TEP1-C chain contains the thioester bond which covalently binds to the pathogen surface. Cleavage is induced by bacterial infection or aseptic wound injury. During embryonic and pupal development, the cleaved form is the predominant form. In terms of processing, N-glycosylated. As to expression, specifically expressed in hemocytes (at protein level).

It localises to the secreted. In terms of biological role, plays an essential role in the innate immune response to bacteria and protozoa infection. After proteolytic cleavage, the protein C-terminus binds covalently through a thioester bond to the pathogen surface resulting in pathogen clearance either by melanization or lysis. Initiate the recruitment and activation of a cascade of proteases, mostly of CLIP-domain serine proteases, which leads to the proteolytic cleavage of the prophenoloxidase (PPO) into active phenoloxidase (PO), the rate-limiting enzyme in melanin biosynthesis. In response to parasite P.berghei-mediated infection, binds to and mediates killing of ookinetes, as they egress from midgut epithelial cells into the basal labyrinth, by both lysis and melanization. During bacterial infection, binds to both Gram-positive and Gram-negative bacteria but only promotes phagocytosis of Gram-negative bacteria. Promotes the accumulation of SPCLIP1 onto the surface of P.berghei ookinetes and bacterium E.coli which leads to the melanization of the pathogen. Recruits CLIPA2 to bacteria surface. In response to bacterial infection, required for periostial hemocyte aggregation, but not for the aggregation of sessile hemocytes in non-periostial regions. During the late stage of fungus B.bassiana-mediated infection, required for the initiation of hyphae melanization by binding to the surface of hyphae and recruiting prophenoloxidase PPO to them. Plays a role in male fertility by binding to defective sperm cells and promoting their removal during spermatogenesis. Its function is as follows. Binds covalently through a thioester bond to the pathogen surface resulting in pathogen clearance. This chain is Thioester-containing protein 1 allele S1, found in Anopheles gambiae (African malaria mosquito).